Reading from the N-terminus, the 402-residue chain is Peptidyl-prolyl cis-trans isomerase FKBP8 (402 aa).

A compositionally biased stretch (acidic residues) spans Asp28 to Leu39. The tract at residues Asp28–Glu54 is disordered. One can recognise a PPIase FKBP-type domain in the interval Gly110–Glu194. Residues Ala211–Asn244 form a TPR 1 repeat. Residues Lys239, Lys261, Lys263, and Lys274 each participate in a glycyl lysine isopeptide (Lys-Gly) (interchain with G-Cter in ubiquitin) cross-link. 2 TPR repeats span residues Val262 to Asn295 and Ile296 to Asn329. A Phosphoserine modification is found at Ser286. Glycyl lysine isopeptide (Lys-Gly) (interchain with G-Cter in ubiquitin) cross-links involve residues Lys297, Lys304, Lys324, Lys330, Lys338, Lys341, and Lys342. The chain crosses the membrane as a helical span at residues Trp380–Ala400.

As to quaternary structure, homomultimers or heteromultimers (Potential). Forms heterodimer with calmodulin. When activated by calmodulin and calcium, interacts with the BH4 domain of BCL2 and weakly with BCLX isoform Bcl-X(L). Does not bind and inhibit calcineurin. Interacts with ZFYVE27; may negatively regulate ZFYVE27 phosphorylation. Ca(2+) serves as cofactor. Post-translationally, ubiquitinated by PRKN during mitophagy, leading to its degradation and enhancement of mitophagy. Deubiquitinated by USP30. Detected throughout the embryonic body, in caudal neural tube, limbs and head. Detected in adult retina, brain, heart, kidney, liver, pancreas, lung, testis and urinary bladder (at protein level). Detected in adult brain, kidney, liver, testis and trigeminal nerve, and in embryo. Detected at lower levels in lung, spleen, heart and ovary. Widely expressed in forebrain. Detected in the Purkinje cell layer in the cerebellum and in hippocampus neurons.

It localises to the mitochondrion membrane. It catalyses the reaction [protein]-peptidylproline (omega=180) = [protein]-peptidylproline (omega=0). Its function is as follows. Constitutively inactive PPiase, which becomes active when bound to calmodulin and calcium. Seems to act as a chaperone for BCL2, targets it to the mitochondria and modulates its phosphorylation state. The BCL2/FKBP8/calmodulin/calcium complex probably interferes with the binding of BCL2 to its targets. The active form of FKBP8 may therefore play a role in the regulation of apoptosis. Required for normal embryonic development. The sequence is that of Peptidyl-prolyl cis-trans isomerase FKBP8 (Fkbp8) from Mus musculus (Mouse).